We begin with the raw amino-acid sequence, 559 residues long: Small ribosomal subunit protein bS1 (559 aa).

6 consecutive S1 motif domains span residues 21–87 (GSII…LSRE), 105–171 (SETV…VSRR), 192–260 (GIEI…LGLK), 277–347 (GIKL…LGLK), 364–434 (GIHV…LGIK), and 451–520 (GAII…LTFH).

The protein belongs to the bacterial ribosomal protein bS1 family.

Its function is as follows. Binds mRNA; thus facilitating recognition of the initiation point. It is needed to translate mRNA with a short Shine-Dalgarno (SD) purine-rich sequence. The protein is Small ribosomal subunit protein bS1 (rpsA) of Buchnera aphidicola subsp. Schizaphis graminum (strain Sg).